Reading from the N-terminus, the 428-residue chain is Enolase (428 aa).

(2R)-2-phosphoglycerate is bound at residue Gln163. Glu205 acts as the Proton donor in catalysis. Mg(2+)-binding residues include Asp242, Glu283, and Asp310. (2R)-2-phosphoglycerate is bound by residues Lys335, Arg364, Ser365, and Lys386. The active-site Proton acceptor is Lys335.

It belongs to the enolase family. It depends on Mg(2+) as a cofactor.

It localises to the cytoplasm. The protein localises to the secreted. The protein resides in the cell surface. It carries out the reaction (2R)-2-phosphoglycerate = phosphoenolpyruvate + H2O. It participates in carbohydrate degradation; glycolysis; pyruvate from D-glyceraldehyde 3-phosphate: step 4/5. Functionally, catalyzes the reversible conversion of 2-phosphoglycerate (2-PG) into phosphoenolpyruvate (PEP). It is essential for the degradation of carbohydrates via glycolysis. The chain is Enolase from Sulfurihydrogenibium sp. (strain YO3AOP1).